Consider the following 831-residue polypeptide: Glucan 1,3-beta-glucosidase D (831 aa).

The segment covering 1-21 (MPSQSRSRDRYGRDSDRDRSR) has biased composition (basic and acidic residues). 2 disordered regions span residues 1 to 246 (MPSQ…RGQS) and 261 to 288 (APDM…SDGS). Topologically, residues 1–300 (MPSQSRSRDR…LTPFWKRKKW (300 aa)) are cytoplasmic. Residues 32 to 41 (EDDDDDDDFD) are compositionally biased toward acidic residues. 3 stretches are compositionally biased toward basic and acidic residues: residues 42 to 70 (DNPR…HDDY), 78 to 94 (EPRR…ERAR), and 151 to 177 (DAAR…HKST). Residues 178–195 (DSSNSSAGLLNANALAKL) are compositionally biased toward low complexity. 2 stretches are compositionally biased toward basic and acidic residues: residues 197–216 (AQHE…EAKA) and 275–286 (PPRERRWEKDSD). Residues 301 to 321 (WWIGAIVLVIVVIIIVVAVVV) traverse the membrane as a helical; Signal-anchor for type II membrane protein segment. At 322–831 (SNNKKSDSDS…PSFGNLPEYY (510 aa)) the chain is on the extracellular side. The tract at residues 325–360 (KKSDSDSDSDSNSGSSDSWGGDKSSLNGLDHDSIPK) is disordered. Low complexity predominate over residues 334-350 (DSNSGSSDSWGGDKSSL). N-linked (GlcNAc...) asparagine glycosylation is found at asparagine 379, asparagine 396, and asparagine 547. The Proton donor role is filled by glutamate 598. 4 N-linked (GlcNAc...) asparagine glycosylation sites follow: asparagine 611, asparagine 637, asparagine 670, and asparagine 690. Glutamate 703 acts as the Nucleophile in catalysis.

The protein belongs to the glycosyl hydrolase 5 (cellulase A) family.

The protein localises to the cell membrane. The enzyme catalyses Successive hydrolysis of beta-D-glucose units from the non-reducing ends of (1-&gt;3)-beta-D-glucans, releasing alpha-glucose.. In terms of biological role, glucosidase involved in the degradation of cellulosic biomass. Active on lichenan. The polypeptide is Glucan 1,3-beta-glucosidase D (exgD) (Emericella nidulans (strain FGSC A4 / ATCC 38163 / CBS 112.46 / NRRL 194 / M139) (Aspergillus nidulans)).